A 94-amino-acid polypeptide reads, in one-letter code: Co-chaperonin GroES (94 aa).

The protein belongs to the GroES chaperonin family. In terms of assembly, heptamer of 7 subunits arranged in a ring. Interacts with the chaperonin GroEL.

The protein resides in the cytoplasm. Together with the chaperonin GroEL, plays an essential role in assisting protein folding. The GroEL-GroES system forms a nano-cage that allows encapsulation of the non-native substrate proteins and provides a physical environment optimized to promote and accelerate protein folding. GroES binds to the apical surface of the GroEL ring, thereby capping the opening of the GroEL channel. In Geobacillus stearothermophilus (Bacillus stearothermophilus), this protein is Co-chaperonin GroES.